The chain runs to 384 residues: S-adenosylmethionine synthase (384 aa).

His15 contacts ATP. Asp17 lines the Mg(2+) pocket. Glu43 provides a ligand contact to K(+). Glu56 and Gln99 together coordinate L-methionine. Positions 99–109 are flexible loop; the sequence is QSPDINQGVDR. Residues 164 to 166, 230 to 231, Asp239, 245 to 246, Ala262, and Lys266 contribute to the ATP site; these read DAK, RF, and RK. Residue Asp239 participates in L-methionine binding. Residue Lys270 coordinates L-methionine.

The protein belongs to the AdoMet synthase family. In terms of assembly, homotetramer; dimer of dimers. Requires Mg(2+) as cofactor. It depends on K(+) as a cofactor.

It is found in the cytoplasm. It carries out the reaction L-methionine + ATP + H2O = S-adenosyl-L-methionine + phosphate + diphosphate. Its pathway is amino-acid biosynthesis; S-adenosyl-L-methionine biosynthesis; S-adenosyl-L-methionine from L-methionine: step 1/1. Catalyzes the formation of S-adenosylmethionine (AdoMet) from methionine and ATP. The overall synthetic reaction is composed of two sequential steps, AdoMet formation and the subsequent tripolyphosphate hydrolysis which occurs prior to release of AdoMet from the enzyme. The protein is S-adenosylmethionine synthase of Proteus mirabilis (strain HI4320).